The sequence spans 670 residues: Transcription factor Ken 2 (670 aa).

The region spanning 108–176 is the BTB domain; sequence TDLLLICDGK…LYSGQVYVRS (69 aa). Disordered regions lie at residues 200 to 288 and 307 to 470; these read SDGS…DRDR and NNHP…SDDA. Residues 218–230 show a composition bias toward polar residues; that stretch reads NRNTEGITGSSVV. Residues 325 to 338 show a composition bias toward basic residues; the sequence is HHLHHHHHHHHRQL. Gly residues-rich tracts occupy residues 351–368 and 389–400; these read GGGS…GESG and SGGGGAGSGRRS. The segment covering 407-419 has biased composition (acidic residues); sequence EPAEDDEDYELDV. The span at 451–464 shows a compositional bias: polar residues; the sequence is SDPVNLSIVKQQQD. The segment at 586–594 adopts a C2H2-type 1; degenerate zinc-finger fold; the sequence is NLKTHLRVH. C2H2-type zinc fingers lie at residues 600 to 623 and 636 to 658; these read FACR…CSVH and YTCC…LSGH.

It localises to the nucleus. Its function is as follows. Transcription factor required for terminalia development. Negative regulator of the JAK/STAT pathway: represses JAK/STAT-dependent expression of ventral veins lacking (vvl) in the posterior spiracles. The protein is Transcription factor Ken 2 of Culex quinquefasciatus (Southern house mosquito).